A 387-amino-acid polypeptide reads, in one-letter code: 3-ketoacyl-CoA thiolase (387 aa).

Catalysis depends on C91, which acts as the Acyl-thioester intermediate. Residues H343 and C373 each act as proton acceptor in the active site.

It belongs to the thiolase-like superfamily. Thiolase family. Heterotetramer of two alpha chains (FadB) and two beta chains (FadA).

The protein resides in the cytoplasm. The enzyme catalyses an acyl-CoA + acetyl-CoA = a 3-oxoacyl-CoA + CoA. It functions in the pathway lipid metabolism; fatty acid beta-oxidation. Functionally, catalyzes the final step of fatty acid oxidation in which acetyl-CoA is released and the CoA ester of a fatty acid two carbons shorter is formed. The polypeptide is 3-ketoacyl-CoA thiolase (Erwinia tasmaniensis (strain DSM 17950 / CFBP 7177 / CIP 109463 / NCPPB 4357 / Et1/99)).